The primary structure comprises 340 residues: Coproporphyrin III ferrochelatase (340 aa).

Fe-coproporphyrin III contacts are provided by Ser-52 and Tyr-121. His-177 and Glu-260 together coordinate Fe(2+).

It belongs to the ferrochelatase family.

It localises to the cytoplasm. It catalyses the reaction Fe-coproporphyrin III + 2 H(+) = coproporphyrin III + Fe(2+). The protein operates within porphyrin-containing compound metabolism; protoheme biosynthesis. Functionally, involved in coproporphyrin-dependent heme b biosynthesis. Catalyzes the insertion of ferrous iron into coproporphyrin III to form Fe-coproporphyrin III. This Mycobacteroides abscessus (strain ATCC 19977 / DSM 44196 / CCUG 20993 / CIP 104536 / JCM 13569 / NCTC 13031 / TMC 1543 / L948) (Mycobacterium abscessus) protein is Coproporphyrin III ferrochelatase.